A 431-amino-acid polypeptide reads, in one-letter code: Glutamate-1-semialdehyde 2,1-aminomutase (431 aa).

An N6-(pyridoxal phosphate)lysine modification is found at Lys265.

Belongs to the class-III pyridoxal-phosphate-dependent aminotransferase family. HemL subfamily. Homodimer. Pyridoxal 5'-phosphate is required as a cofactor.

It localises to the cytoplasm. The enzyme catalyses (S)-4-amino-5-oxopentanoate = 5-aminolevulinate. It functions in the pathway porphyrin-containing compound metabolism; protoporphyrin-IX biosynthesis; 5-aminolevulinate from L-glutamyl-tRNA(Glu): step 2/2. This Vibrio vulnificus (strain YJ016) protein is Glutamate-1-semialdehyde 2,1-aminomutase.